The sequence spans 72 residues: U-poneritoxin(01)-Om7a (72 aa).

The first 27 residues, 1 to 27 (MKPSGLTFAFLVVFMMAIMYNSVQVTA), serve as a signal peptide directing secretion. Positions 28 to 45 (DADADAEAEALANALAEA) are excised as a propeptide.

This sequence belongs to the formicidae venom precursor-01 superfamily. As to expression, expressed by the venom gland.

The protein localises to the secreted. In terms of biological role, peptide with unknown function that does not resemble any other pilosulin-like peptide and appears to have a coiled coil structure. The chain is U-poneritoxin(01)-Om7a from Odontomachus monticola (Trap-jaw ant).